The chain runs to 925 residues: Protein translocase subunit SecA (925 aa).

Residues Gln-87, 105 to 109 (GEGKT), and Asp-515 contribute to the ATP site. Residues Cys-909, Cys-911, Cys-920, and His-921 each contribute to the Zn(2+) site.

The protein belongs to the SecA family. In terms of assembly, monomer and homodimer. Part of the essential Sec protein translocation apparatus which comprises SecA, SecYEG and auxiliary proteins SecDF-YajC and YidC. Requires Zn(2+) as cofactor.

It is found in the cell inner membrane. The protein localises to the cytoplasm. It carries out the reaction ATP + H2O + cellular proteinSide 1 = ADP + phosphate + cellular proteinSide 2.. Its function is as follows. Part of the Sec protein translocase complex. Interacts with the SecYEG preprotein conducting channel. Has a central role in coupling the hydrolysis of ATP to the transfer of proteins into and across the cell membrane, serving both as a receptor for the preprotein-SecB complex and as an ATP-driven molecular motor driving the stepwise translocation of polypeptide chains across the membrane. The polypeptide is Protein translocase subunit SecA (Cupriavidus taiwanensis (strain DSM 17343 / BCRC 17206 / CCUG 44338 / CIP 107171 / LMG 19424 / R1) (Ralstonia taiwanensis (strain LMG 19424))).